The chain runs to 418 residues: Probable endo-beta-1,4-glucanase celB (418 aa).

The N-terminal stretch at 1 to 18 is a signal peptide; it reads MVRTFAVTALALLPLVAA. Residues Asn46, Asn118, and Asn136 are each glycosylated (N-linked (GlcNAc...) asparagine). Glu215 serves as the catalytic Nucleophile. Catalysis depends on Glu220, which acts as the Proton donor. Residues Asn234 and Asn291 are each glycosylated (N-linked (GlcNAc...) asparagine).

The protein belongs to the glycosyl hydrolase 7 (cellulase C) family.

The protein localises to the secreted. The enzyme catalyses Endohydrolysis of (1-&gt;4)-beta-D-glucosidic linkages in cellulose, lichenin and cereal beta-D-glucans.. Its function is as follows. Has endoglucanase activity on substrates containing beta-1,4 glycosidic bonds, like in carboxymethylcellulose (CMC), hydroxyethylcellulose (HEC) and beta-glucan. Involved in the degradation of complex natural cellulosic substrates. This chain is Probable endo-beta-1,4-glucanase celB (celB), found in Aspergillus clavatus (strain ATCC 1007 / CBS 513.65 / DSM 816 / NCTC 3887 / NRRL 1 / QM 1276 / 107).